A 100-amino-acid polypeptide reads, in one-letter code: Large ribosomal subunit protein uL23 (100 aa).

The protein belongs to the universal ribosomal protein uL23 family. Part of the 50S ribosomal subunit. Contacts protein L29, and trigger factor when it is bound to the ribosome.

One of the early assembly proteins it binds 23S rRNA. One of the proteins that surrounds the polypeptide exit tunnel on the outside of the ribosome. Forms the main docking site for trigger factor binding to the ribosome. The chain is Large ribosomal subunit protein uL23 from Prochlorococcus marinus (strain MIT 9312).